A 67-amino-acid chain; its full sequence is Large ribosomal subunit protein bL35 (67 aa).

The disordered stretch occupies residues 21–50 (KVMCGPGNKRHGLINRPQKMKRTNRGPQTM). A compositionally biased stretch (basic residues) spans 28–44 (NKRHGLINRPQKMKRTN).

This sequence belongs to the bacterial ribosomal protein bL35 family.

The protein is Large ribosomal subunit protein bL35 of Gluconobacter oxydans (strain 621H) (Gluconobacter suboxydans).